The primary structure comprises 598 residues: Nuclear receptor subfamily 4 group A member 1 (598 aa).

Disordered regions lie at residues 1 to 43 (MPCI…PEAA) and 128 to 151 (GSDYYGSPCSAPSPSTPSFQPPQL). The segment covering 134–145 (SPCSAPSPSTPS) has biased composition (low complexity). A required for nuclear import region spans residues 171–466 (RAWTEQLPKA…PAEGKLIFCS (296 aa)). Residues 264–339 (EGRCAVCGDN…VGMVKEVVRT (76 aa)) constitute a DNA-binding region (nuclear receptor). 2 consecutive NR C4-type zinc fingers follow at residues 267–287 (CAVCGDNASCQHYGVRTCEGC) and 303–327 (CLANKDCPVDKRRRNRCQFCRFQKC). Residues 268 to 354 (AVCGDNASCQ…RRGRLPSKPK (87 aa)) form a required for binding NBRE-containing DNA region. The required for the interaction with RXRA stretch occupies residues 299 to 361 (AKYICLANKD…KPKQPPETSP (63 aa)). Ser-341 carries the phosphoserine; by PKA modification. Residues 341 to 361 (SLKGRRGRLPSKPKQPPETSP) form a disordered region. A Phosphoserine; by PKA, RPS6KA1 and RPS6KA3 modification is found at Ser-351. An NR LBD domain is found at 360 to 595 (SPAHLLTSLV…PIVDKIFMDT (236 aa)). The interval 521-544 (PRRVEELQNRIASCLKEHVSAEAG) is binds lipopolysaccharide. The segment at 584–595 (PPPIVDKIFMDT) is AF-2.

This sequence belongs to the nuclear hormone receptor family. NR4 subfamily. As to quaternary structure, binds the NGFI-B response element (NBRE) as a monomer. Binds the Nur response element (NurRE), consisting of two inverse NBRE-related octanucleotide repeats separated by 6 base-pairs, as a dimer. Interacts (via N-terminus) with NLRP3 (via LRR repeat domain); the interaction is direct, requires binding of NR4A1/Nur77 to NBRE-containing dsDNA and lipopolysaccharide, and leads to non-canonical NLRP3 inflammasome activation. Interacts with GADD45GIP1. Interacts with STK11. Interacts with IFI27. Heterodimer (via DNA-binding domain) with RXRA (via C-terminus); DNA-binding of the heterodimer is enhanced by 9-cis retinoic acid. Competes for the RXRA interaction with EP300 and thereby attenuates EP300 mediated acetylation of RXRA. Interacts with NCOA1. Interacts with NCOA2. Interacts with NCOA3. Zn(2+) serves as cofactor. In terms of processing, phosphorylated at Ser-351 by RPS6KA1 and RPS6KA3 in response to mitogenic or stress stimuli. Acetylated by p300/CBP, acetylation increases stability. Deacetylated by HDAC1.

The protein localises to the nucleus. It is found in the cytoplasm. The protein resides in the cytosol. It localises to the mitochondrion. Functionally, orphan nuclear receptor. Binds the NGFI-B response element (NBRE) 5'-AAAGGTCA-3'. Binds 9-cis-retinoic acid outside of its ligand-binding (NR LBD) domain. Participates in energy homeostasis by sequestrating the kinase STK11 in the nucleus, thereby attenuating cytoplasmic AMPK activation. Regulates the inflammatory response in macrophages by regulating metabolic adaptations during inflammation, including repressing the transcription of genes involved in the citric acid cycle (TCA). Inhibits NF-kappa-B signaling by binding to low-affinity NF-kappa-B binding sites, such as at the IL2 promoter. May act concomitantly with NR4A2 in regulating the expression of delayed-early genes during liver regeneration. Plays a role in the vascular response to injury. In terms of biological role, in the cytosol, upon its detection of both bacterial lipopolysaccharide (LPS) and NBRE-containing mitochondrial DNA released by GSDMD pores during pyroptosis, it promotes non-canonical NLRP3 inflammasome activation by stimulating association of NLRP3 and NEK7. The protein is Nuclear receptor subfamily 4 group A member 1 (NR4A1) of Bos taurus (Bovine).